We begin with the raw amino-acid sequence, 505 residues long: Glycerol kinase (505 aa).

An ADP-binding site is contributed by Thr-15. ATP-binding residues include Thr-15, Thr-16, and Ser-17. Thr-15 is a sn-glycerol 3-phosphate binding site. Arg-19 is an ADP binding site. Sn-glycerol 3-phosphate contacts are provided by Arg-85, Glu-86, Tyr-136, and Asp-249. Glycerol is bound by residues Arg-85, Glu-86, Tyr-136, Asp-249, and Gln-250. Residues Thr-271 and Gly-314 each coordinate ADP. Thr-271, Gly-314, Gln-318, and Gly-415 together coordinate ATP. Residues Gly-415 and Asn-419 each coordinate ADP.

The protein belongs to the FGGY kinase family.

The catalysed reaction is glycerol + ATP = sn-glycerol 3-phosphate + ADP + H(+). It functions in the pathway polyol metabolism; glycerol degradation via glycerol kinase pathway; sn-glycerol 3-phosphate from glycerol: step 1/1. Its activity is regulated as follows. Inhibited by fructose 1,6-bisphosphate (FBP). Functionally, key enzyme in the regulation of glycerol uptake and metabolism. Catalyzes the phosphorylation of glycerol to yield sn-glycerol 3-phosphate. In Mycoplasma capricolum subsp. capricolum (strain California kid / ATCC 27343 / NCTC 10154), this protein is Glycerol kinase.